Here is a 542-residue protein sequence, read N- to C-terminus: Sensor protein CitS (542 aa).

The Cytoplasmic portion of the chain corresponds to 1–13; that stretch reads MVKKRFHFSLQTK. Residues 14–34 traverse the membrane as a helical segment; that stretch reads IMGLIAALLVFVIGVLTITLA. The Extracellular portion of the chain corresponds to 35-175; sequence VQHTQGERRQ…TEQSIKKHLR (141 aa). The chain crosses the membrane as a helical span at residues 176–196; that stretch reads NLSVIAVLVLLLGFIGAAVLA. The Cytoplasmic portion of the chain corresponds to 197-542; it reads KSIRKDTLGL…PFDSHRDCGG (346 aa). The PAS domain maps to 216 to 279; the sequence is RERNAMLFAI…MSVLEKGEML (64 aa). Residues 336–528 enclose the Histidine kinase domain; sequence AQTHEFSNKL…VFTVFIPKEK (193 aa). H339 carries the phosphohistidine; by autocatalysis modification.

Its subcellular location is the cell membrane. It carries out the reaction ATP + protein L-histidine = ADP + protein N-phospho-L-histidine.. In terms of biological role, member of the two-component regulatory system CitT/CitS. Regulates the expression of the citM-yflN operon. Functions probably as a membrane-associated protein kinase that phosphorylates CitT in response to environmental citrate or Mg(2+)-citrate complex. The protein is Sensor protein CitS (citS) of Bacillus subtilis (strain 168).